Here is a 421-residue protein sequence, read N- to C-terminus: UDP-N-acetylglucosamine 1-carboxyvinyltransferase (421 aa).

22–23 provides a ligand contact to phosphoenolpyruvate; it reads KN. R95 serves as a coordination point for UDP-N-acetyl-alpha-D-glucosamine. The active-site Proton donor is C119. 2-(S-cysteinyl)pyruvic acid O-phosphothioketal is present on C119. Residues 124–128, D309, and I331 contribute to the UDP-N-acetyl-alpha-D-glucosamine site; that span reads RPVDQ.

It belongs to the EPSP synthase family. MurA subfamily.

It is found in the cytoplasm. The catalysed reaction is phosphoenolpyruvate + UDP-N-acetyl-alpha-D-glucosamine = UDP-N-acetyl-3-O-(1-carboxyvinyl)-alpha-D-glucosamine + phosphate. It participates in cell wall biogenesis; peptidoglycan biosynthesis. In terms of biological role, cell wall formation. Adds enolpyruvyl to UDP-N-acetylglucosamine. This is UDP-N-acetylglucosamine 1-carboxyvinyltransferase from Leptothrix cholodnii (strain ATCC 51168 / LMG 8142 / SP-6) (Leptothrix discophora (strain SP-6)).